A 206-amino-acid chain; its full sequence is Glycerol-3-phosphate acyltransferase (206 aa).

5 consecutive transmembrane segments (helical) span residues 3 to 23 (LGWL…SYII), 51 to 71 (VGPA…AVVV), 83 to 103 (FAAA…YYGF), 113 to 133 (IGVL…IAIG), and 162 to 182 (WFGY…LSMW).

Belongs to the PlsY family. As to quaternary structure, probably interacts with PlsX.

The protein resides in the cell membrane. It catalyses the reaction an acyl phosphate + sn-glycerol 3-phosphate = a 1-acyl-sn-glycero-3-phosphate + phosphate. Its pathway is lipid metabolism; phospholipid metabolism. Its function is as follows. Catalyzes the transfer of an acyl group from acyl-phosphate (acyl-PO(4)) to glycerol-3-phosphate (G3P) to form lysophosphatidic acid (LPA). This enzyme utilizes acyl-phosphate as fatty acyl donor, but not acyl-CoA or acyl-ACP. The protein is Glycerol-3-phosphate acyltransferase of Halalkalibacterium halodurans (strain ATCC BAA-125 / DSM 18197 / FERM 7344 / JCM 9153 / C-125) (Bacillus halodurans).